Reading from the N-terminus, the 86-residue chain is Small ribosomal subunit protein bS18c (86 aa).

Belongs to the bacterial ribosomal protein bS18 family. Part of the 30S ribosomal subunit.

It localises to the plastid. The protein localises to the chloroplast. In Pseudotsuga menziesii (Douglas-fir), this protein is Small ribosomal subunit protein bS18c.